The sequence spans 103 residues: Large ribosomal subunit protein bL21 (103 aa).

This sequence belongs to the bacterial ribosomal protein bL21 family. Part of the 50S ribosomal subunit. Contacts protein L20.

Its function is as follows. This protein binds to 23S rRNA in the presence of protein L20. This chain is Large ribosomal subunit protein bL21, found in Shewanella amazonensis (strain ATCC BAA-1098 / SB2B).